We begin with the raw amino-acid sequence, 316 residues long: Fe-S cluster assembly protein DRE2 (316 aa).

The N-terminal SAM-like domain stretch occupies residues 7–139; sequence VSPPKRTLLL…PDYGDNEGAV (133 aa). The linker stretch occupies residues 140 to 208; that stretch reads TLKFGLKKKN…EDTLMTEEDL (69 aa). Positions 218, 229, 232, and 234 each coordinate [2Fe-2S] cluster. Positions 218–234 are fe-S binding site A; it reads CQPKAGKRRRACKDCSC. Positions 279, 282, 290, and 293 each coordinate [4Fe-4S] cluster. 2 short sequence motifs (cx2C motif) span residues 279 to 282 and 290 to 293; these read CGNC and CDGC. The segment at 279-293 is fe-S binding site B; the sequence is CGNCSLGDAFRCDGC.

The protein belongs to the anamorsin family. Monomer. Interacts with TAH18. Interacts with MIA40. The cofactor is [2Fe-2S] cluster. [4Fe-4S] cluster is required as a cofactor.

The protein localises to the cytoplasm. The protein resides in the mitochondrion intermembrane space. Functionally, component of the cytosolic iron-sulfur (Fe-S) protein assembly (CIA) machinery required for the maturation of extramitochondrial Fe-S proteins. Part of an electron transfer chain functioning in an early step of cytosolic Fe-S biogenesis, facilitating the de novo assembly of a [4Fe-4S] cluster on the scaffold complex CFD1-NBP35. Electrons are transferred to DRE2 from NADPH via the FAD- and FMN-containing protein TAH18. TAH18-DRE2 are also required for the assembly of the diferric tyrosyl radical cofactor of ribonucleotide reductase (RNR), probably by providing electrons for reduction during radical cofactor maturation in the catalytic small subunit RNR2. The protein is Fe-S cluster assembly protein DRE2 of Fusarium vanettenii (strain ATCC MYA-4622 / CBS 123669 / FGSC 9596 / NRRL 45880 / 77-13-4) (Fusarium solani subsp. pisi).